A 237-amino-acid polypeptide reads, in one-letter code: Orotidine 5'-phosphate decarboxylase (237 aa).

Residues Asp17, Lys39, 66-75 (DLKLHDIGNT), Thr121, Arg182, Gln191, Gly211, and Arg212 contribute to the substrate site. The active-site Proton donor is Lys68.

This sequence belongs to the OMP decarboxylase family. Type 1 subfamily. Homodimer.

It catalyses the reaction orotidine 5'-phosphate + H(+) = UMP + CO2. Its pathway is pyrimidine metabolism; UMP biosynthesis via de novo pathway; UMP from orotate: step 2/2. Its function is as follows. Catalyzes the decarboxylation of orotidine 5'-monophosphate (OMP) to uridine 5'-monophosphate (UMP). The sequence is that of Orotidine 5'-phosphate decarboxylase from Rhodopseudomonas palustris (strain TIE-1).